A 152-amino-acid chain; its full sequence is Small ribosomal subunit protein uS11 (152 aa).

Residues 133-152 form a disordered region; it reads VTPIPTDSTRRKSGHRGRRL. Basic residues predominate over residues 143–152; that stretch reads RKSGHRGRRL.

Belongs to the universal ribosomal protein uS11 family. Component of the small ribosomal subunit. Part of the small subunit (SSU) processome, composed of more than 70 proteins and the RNA chaperone small nucleolar RNA (snoRNA) U3.

The protein localises to the cytoplasm. It is found in the nucleus. It localises to the nucleolus. Functionally, component of the small ribosomal subunit. The ribosome is a large ribonucleoprotein complex responsible for the synthesis of proteins in the cell. Part of the small subunit (SSU) processome, first precursor of the small eukaryotic ribosomal subunit. During the assembly of the SSU processome in the nucleolus, many ribosome biogenesis factors, an RNA chaperone and ribosomal proteins associate with the nascent pre-rRNA and work in concert to generate RNA folding, modifications, rearrangements and cleavage as well as targeted degradation of pre-ribosomal RNA by the RNA exosome. The protein is Small ribosomal subunit protein uS11 (rps14) of Dictyostelium discoideum (Social amoeba).